The primary structure comprises 129 residues: Photosystem II reaction center Psb28 protein (129 aa).

A disordered region spans residues 110–129 (GLGYSNNSGNNEGADEASEG).

It belongs to the Psb28 family. In terms of assembly, part of the photosystem II complex.

It is found in the cellular thylakoid membrane. This Synechococcus sp. (strain WH7803) protein is Photosystem II reaction center Psb28 protein.